We begin with the raw amino-acid sequence, 461 residues long: L-seryl-tRNA(Sec) selenium transferase (461 aa).

N6-(pyridoxal phosphate)lysine is present on lysine 291.

Belongs to the SelA family. The cofactor is pyridoxal 5'-phosphate.

The protein resides in the cytoplasm. The enzyme catalyses L-seryl-tRNA(Sec) + selenophosphate + H(+) = L-selenocysteinyl-tRNA(Sec) + phosphate. It participates in aminoacyl-tRNA biosynthesis; selenocysteinyl-tRNA(Sec) biosynthesis; selenocysteinyl-tRNA(Sec) from L-seryl-tRNA(Sec) (bacterial route): step 1/1. Its function is as follows. Converts seryl-tRNA(Sec) to selenocysteinyl-tRNA(Sec) required for selenoprotein biosynthesis. In Caldanaerobacter subterraneus subsp. tengcongensis (strain DSM 15242 / JCM 11007 / NBRC 100824 / MB4) (Thermoanaerobacter tengcongensis), this protein is L-seryl-tRNA(Sec) selenium transferase.